The chain runs to 208 residues: Methyl-CpG-binding domain protein 3-like 4 (208 aa).

Belongs to the MBD3L family.

This is Methyl-CpG-binding domain protein 3-like 4 (MBD3L4) from Homo sapiens (Human).